A 423-amino-acid chain; its full sequence is Acyl-coenzyme A diphosphatase FITM2 (423 aa).

Residues 1-47 (MATKRRPLRPNLGGTAGSPSSSGSNMNFRPGGPDITRSEARGTRPTA) are disordered. The Cytoplasmic segment spans residues 1–75 (MATKRRPLRP…KTIFFNTDLK (75 aa)). The helical transmembrane segment at 76–96 (VALYLGSLFVISVIGDFVPFP) threads the bilayer. Topologically, residues 97 to 113 (KTYFARSDNLFNQYFVK) are lumenal. A helical transmembrane segment spans residues 114-134 (IGWGWTLLFVVPFLVLSAYTI). The Cytoplasmic portion of the chain corresponds to 135-146 (TCGDHKRMLRHH). A helical transmembrane segment spans residues 147 to 167 (FPRIVIATFFWFFWTKLFNVV). Residues 168–191 (ENSYGRCTTKGYATKSSCLKAGHL) lie on the Lumenal side of the membrane. The helical transmembrane segment at 192-212 (WKGFDISGHAFILIHSSLVLI) threads the bilayer. His-200 is a catalytic residue. The Cytoplasmic portion of the chain corresponds to 213 to 270 (EEARPIIRWETIKEHIRNERHNRSTAENSGTNPLRTLNEEQMRSLQFLYKRLTPIIRT). A helical membrane pass occupies residues 271–291 (LFIGMAALQLLWDIMLVGTML). Residues 292 to 299 (YYHRMIEK) are Lumenal-facing. His-294 is a catalytic residue. Residues 300–320 (VISGIIAILTWYFTYRFWYPT) traverse the membrane as a helical segment. Residues 321 to 423 (PGLLPEAPGN…RDREQQTLES (103 aa)) are Cytoplasmic-facing. Disordered stretches follow at residues 344-381 (FKRP…PRDQ) and 400-423 (AAAN…TLES). A compositionally biased stretch (low complexity) spans 351–367 (STGAATTSSGSNSSRTN). Residues 409–423 (QQKRERDREQQTLES) are compositionally biased toward basic and acidic residues.

Belongs to the FIT family. FIT2 subfamily.

The protein localises to the endoplasmic reticulum membrane. The catalysed reaction is an acyl-CoA + H2O = an acyl-4'-phosphopantetheine + adenosine 3',5'-bisphosphate + 2 H(+). Fatty acyl-coenzyme A (CoA) diphosphatase that hydrolyzes fatty acyl-CoA to yield acyl-4'-phosphopantetheine and adenosine 3',5'-bisphosphate. Preferentially hydrolyzes unsaturated long-chain acyl-CoA substrates in the endoplasmic reticulum (ER) lumen. This catalytic activity is required for maintaining ER structure and for lipid droplets (LDs) biogenesis, which are lipid storage organelles involved in maintaining lipid and energy homeostasis. May directly bind to diacylglycerol (DAGs) and triacylglycerol, which is also important for LD biogenesis. May support directional budding of nacent LDs from the ER into the cytosol by reducing DAG levels at sites of LD formation. Plays a role in the regulation of cell morphology and cytoskeletal organization. Required for correct morphology of nociceptive multi-dendritic sensory neurons. Required for normal mechanical amplification in hearing. In Drosophila melanogaster (Fruit fly), this protein is Acyl-coenzyme A diphosphatase FITM2.